The chain runs to 296 residues: UBX domain-containing protein 1-A (296 aa).

Positions 1–42 constitute a UBA domain; sequence MAECSTLESLIEMGFSSTRAEKALTATGNQGIEPAMDWLVEH. Positions 43–216 are disordered; that stretch reads EDDPDIDEPS…VQEPPTKKEY (174 aa). Positions 61 to 75 are enriched in low complexity; that stretch reads TDTADTTDTTDTTDT. Composition is skewed to basic and acidic residues over residues 86 to 100, 107 to 123, and 138 to 178; these read PLTE…KRMM, QNER…EQEK, and KMQE…DRAR. The stretch at 87–177 forms a coiled coil; it reads LTEEEKEKQT…KIARDKADRA (91 aa). Residues 191 to 206 show a composition bias toward low complexity; sequence PAETSIPATTPSPSSP. One can recognise a UBX domain in the interval 214–293; sequence KEYDQCRIQV…GLVPTAVLIV (80 aa).

Its subcellular location is the cytoplasm. Component of a complex required to couple deglycosylation and proteasome-mediated degradation of misfolded proteins in the endoplasmic reticulum that are retrotranslocated in the cytosol. Involved in ubiquitin-proteasome systems. The chain is UBX domain-containing protein 1-A (ubxn1-a) from Xenopus laevis (African clawed frog).